The primary structure comprises 525 residues: Ribosomal protein S6 kinase beta-1 (525 aa).

The disordered stretch occupies residues 1–54; that stretch reads MRRRRRRDGFYPAPDFRDREAEDMAGVFDIDLDQPEDAGSEDELEEGGQLNESM. The TOS motif signature appears at 28 to 32; that stretch reads FDIDL. Residues 30–46 are compositionally biased toward acidic residues; it reads IDLDQPEDAGSEDELEE. The region spanning 91 to 352 is the Protein kinase domain; that stretch reads FELLRVLGKG…AGEVQAHPFF (262 aa). ATP-binding positions include 97-105 and lysine 123; that span reads LGKGGYGKV. Aspartate 218 functions as the Proton acceptor in the catalytic mechanism. Threonine 252 bears the Phosphothreonine; by PDPK1 mark. The region spanning 353–423 is the AGC-kinase C-terminal domain; that stretch reads RHINWEELLA…VAPSVLESVK (71 aa). Residues 380-399 are disordered; the sequence is SQFDSKFTRQTPVDSPDDST. The span at 381-399 shows a compositional bias: polar residues; the sequence is QFDSKFTRQTPVDSPDDST. At serine 394 the chain carries Phosphoserine. Threonine 412 carries the post-translational modification Phosphothreonine; by MTOR, NEK6 and NEK7. The autoinhibitory domain stretch occupies residues 424 to 525; it reads EKFSFEPKIR…KRPEHLRMNL (102 aa). Phosphoserine occurs at positions 434 and 441. Residue threonine 444 is modified to Phosphothreonine. Residues serine 447 and serine 452 each carry the phosphoserine modification. Lysine 516 carries the post-translational modification N6-acetyllysine.

It belongs to the protein kinase superfamily. AGC Ser/Thr protein kinase family. S6 kinase subfamily. Interacts with PPP1R9A/neurabin-1. Interacts with RPTOR. Interacts with IRS1. Interacts with EIF3B and EIF3C. Interacts with TRAF4. Interacts with POLDIP3. Interacts (via N-terminus) with IER5. As to quaternary structure, (Microbial infection) Interacts with Mumps virus phosphoprotein; this interaction may play a role in the viral replication and transcription. Phosphorylation at Thr-412 is regulated by mTORC1. The phosphorylation at this site is maintained by an agonist-dependent autophosphorylation mechanism. Activated by phosphorylation at Thr-252 by PDPK1. Dephosphorylation by PPP1CC at Thr-412 in mitochondrion. In terms of tissue distribution, widely expressed.

The protein localises to the synapse. It localises to the synaptosome. The protein resides in the mitochondrion outer membrane. It is found in the mitochondrion. Its subcellular location is the nucleus. The protein localises to the cytoplasm. It carries out the reaction L-seryl-[protein] + ATP = O-phospho-L-seryl-[protein] + ADP + H(+). The catalysed reaction is L-threonyl-[protein] + ATP = O-phospho-L-threonyl-[protein] + ADP + H(+). Its activity is regulated as follows. Activation requires multiple phosphorylation events on serine/threonine residues. Activation appears to be first mediated by phosphorylation of multiple sites in the autoinhibitory domain, which facilitates phosphorylation at Thr-412, disrupting the autoinhibitory mechanism and allowing phosphorylation of Thr-252 by PDPK1. The active conformation of the kinase is believed to be stabilized by a mechanism involving three conserved phosphorylation sites located in the kinase domain activation loop (Thr-252) and in the AGC-kinase C-terminal domain (Ser-394 in the middle of the tail/linker region and Thr-412 within a hydrophobic motif at its end). Activated by mTORC1; isoform Alpha I and isoform Alpha II are sensitive to rapamycin, which inhibits activating phosphorylation at Thr-412. Activated by PDPK1. Functionally, serine/threonine-protein kinase that acts downstream of mTOR signaling in response to growth factors and nutrients to promote cell proliferation, cell growth and cell cycle progression. Regulates protein synthesis through phosphorylation of EIF4B, RPS6 and EEF2K, and contributes to cell survival by repressing the pro-apoptotic function of BAD. Under conditions of nutrient depletion, the inactive form associates with the EIF3 translation initiation complex. Upon mitogenic stimulation, phosphorylation by the mechanistic target of rapamycin complex 1 (mTORC1) leads to dissociation from the EIF3 complex and activation. The active form then phosphorylates and activates several substrates in the pre-initiation complex, including the EIF2B complex and the cap-binding complex component EIF4B. Also controls translation initiation by phosphorylating a negative regulator of EIF4A, PDCD4, targeting it for ubiquitination and subsequent proteolysis. Promotes initiation of the pioneer round of protein synthesis by phosphorylating POLDIP3/SKAR. In response to IGF1, activates translation elongation by phosphorylating EEF2 kinase (EEF2K), which leads to its inhibition and thus activation of EEF2. Also plays a role in feedback regulation of mTORC2 by mTORC1 by phosphorylating MAPKAP1/SIN1, MTOR and RICTOR, resulting in the inhibition of mTORC2 and AKT1 signaling. Also involved in feedback regulation of mTORC1 and mTORC2 by phosphorylating DEPTOR. Mediates cell survival by phosphorylating the pro-apoptotic protein BAD and suppressing its pro-apoptotic function. Phosphorylates mitochondrial URI1 leading to dissociation of a URI1-PPP1CC complex. The free mitochondrial PPP1CC can then dephosphorylate RPS6KB1 at Thr-412, which is proposed to be a negative feedback mechanism for the RPS6KB1 anti-apoptotic function. Mediates TNF-alpha-induced insulin resistance by phosphorylating IRS1 at multiple serine residues, resulting in accelerated degradation of IRS1. In cells lacking functional TSC1-2 complex, constitutively phosphorylates and inhibits GSK3B. May be involved in cytoskeletal rearrangement through binding to neurabin. Phosphorylates and activates the pyrimidine biosynthesis enzyme CAD, downstream of MTOR. Following activation by mTORC1, phosphorylates EPRS and thereby plays a key role in fatty acid uptake by adipocytes and also most probably in interferon-gamma-induced translation inhibition. This is Ribosomal protein S6 kinase beta-1 (RPS6KB1) from Homo sapiens (Human).